Here is a 459-residue protein sequence, read N- to C-terminus: Paired box protein Pax-8 (459 aa).

The segment at residues 9-135 is a DNA-binding region (paired); sequence GHGGLNQLGG…SSINRIIRTK (127 aa). Positions 12 to 68 are PAI subdomain; it reads GLNQLGGAFVNGRPLPEVVRQRIVDLAHQGVRPCDISRQLRVSHGCVSKILGRYYET. Residues 87 to 135 form an RED subdomain region; it reads KVVEKIGDYKRQNPTMFAWEIRDRLLAEGVCDNDTVPSVSSINRIIRTK. Over residues 159–182 the composition is skewed to polar residues; that stretch reads LIPSSAVTPPESPQSDSLGSTYSI. A disordered region spans residues 159–223; the sequence is LIPSSAVTPP…QSSSSGPRKH (65 aa). At S305 the chain carries Phosphoserine.

Interacts with WWTR1.

The protein resides in the nucleus. Thought to encode a transcription factor. It may have a role in kidney cell differentiation. May play a regulatory role in mammalian development. This chain is Paired box protein Pax-8 (PAX8), found in Canis lupus familiaris (Dog).